Here is a 278-residue protein sequence, read N- to C-terminus: Undecaprenyl-diphosphatase (278 aa).

8 consecutive transmembrane segments (helical) span residues 3-23, 42-62, 88-108, 112-132, 152-172, 190-210, 225-245, and 253-273; these read YILI…IPIS, VAYS…IIYF, FLVI…LFVI, ILGL…IIIY, IIIV…RSGI, LSFI…VLFS, GLLI…NALL, and VVVL…LSGI.

The protein belongs to the UppP family.

It localises to the cell membrane. The catalysed reaction is di-trans,octa-cis-undecaprenyl diphosphate + H2O = di-trans,octa-cis-undecaprenyl phosphate + phosphate + H(+). Functionally, catalyzes the dephosphorylation of undecaprenyl diphosphate (UPP). This is Undecaprenyl-diphosphatase from Saccharolobus islandicus (strain M.14.25 / Kamchatka #1) (Sulfolobus islandicus).